Reading from the N-terminus, the 170-residue chain is MKDVYLYIVEKSVALEFDSAEYGRLARKTVELLYDRKEELTDDRIAILLNISTAETRRILQYLMKQNLVGVKKRSTEDYRIEYTWYVNDEVISQAVKYRAKVVREKISLMIKALTEEAFYVCPNCFMRYPVEEVMERGGVCPICGSHLEYVENVEEINKLTKVFEKLDKI.

Positions 1 to 93 (MKDVYLYIVE…TWYVNDEVIS (93 aa)) constitute an HTH TFE/IIEalpha-type domain.

The protein belongs to the TFE family. In terms of assembly, monomer. Interaction with RNA polymerase subunits RpoF and RpoE is necessary for Tfe stimulatory transcription activity. Able to interact with Tbp and RNA polymerase in the absence of DNA promoter. Interacts both with the preinitiation and elongation complexes.

Its function is as follows. Transcription factor that plays a role in the activation of archaeal genes transcribed by RNA polymerase. Facilitates transcription initiation by enhancing TATA-box recognition by TATA-box-binding protein (Tbp), and transcription factor B (Tfb) and RNA polymerase recruitment. Not absolutely required for transcription in vitro, but particularly important in cases where Tbp or Tfb function is not optimal. It dynamically alters the nucleic acid-binding properties of RNA polymerases by stabilizing the initiation complex and destabilizing elongation complexes. Seems to translocate with the RNA polymerase following initiation and acts by binding to the non template strand of the transcription bubble in elongation complexes. This Pyrobaculum calidifontis (strain DSM 21063 / JCM 11548 / VA1) protein is Transcription factor E.